Reading from the N-terminus, the 215-residue chain is Pyrrolidone-carboxylate peptidase (215 aa).

Catalysis depends on residues E78, C141, and H165.

This sequence belongs to the peptidase C15 family. Homotetramer.

Its subcellular location is the cytoplasm. The enzyme catalyses Release of an N-terminal pyroglutamyl group from a polypeptide, the second amino acid generally not being Pro.. Removes 5-oxoproline from various penultimate amino acid residues except L-proline. This Lacticaseibacillus paracasei (strain ATCC 334 / BCRC 17002 / CCUG 31169 / CIP 107868 / KCTC 3260 / NRRL B-441) (Lactobacillus paracasei) protein is Pyrrolidone-carboxylate peptidase.